The following is a 438-amino-acid chain: Serine hydroxymethyltransferase (438 aa).

Residues L133 and 137-139 (GHL) each bind (6S)-5,6,7,8-tetrahydrofolate. K242 carries the N6-(pyridoxal phosphate)lysine modification.

This sequence belongs to the SHMT family. In terms of assembly, homodimer. Pyridoxal 5'-phosphate serves as cofactor.

It is found in the cytoplasm. The enzyme catalyses (6R)-5,10-methylene-5,6,7,8-tetrahydrofolate + glycine + H2O = (6S)-5,6,7,8-tetrahydrofolate + L-serine. It participates in one-carbon metabolism; tetrahydrofolate interconversion. Its pathway is amino-acid biosynthesis; glycine biosynthesis; glycine from L-serine: step 1/1. Its function is as follows. Catalyzes the reversible interconversion of serine and glycine with tetrahydrofolate (THF) serving as the one-carbon carrier. This reaction serves as the major source of one-carbon groups required for the biosynthesis of purines, thymidylate, methionine, and other important biomolecules. Also exhibits THF-independent aldolase activity toward beta-hydroxyamino acids, producing glycine and aldehydes, via a retro-aldol mechanism. The sequence is that of Serine hydroxymethyltransferase from Brucella abortus (strain S19).